A 315-amino-acid polypeptide reads, in one-letter code: Methionyl-tRNA formyltransferase (315 aa).

Residue 117–120 coordinates (6S)-5,6,7,8-tetrahydrofolate; sequence SLLP.

Belongs to the Fmt family.

The catalysed reaction is L-methionyl-tRNA(fMet) + (6R)-10-formyltetrahydrofolate = N-formyl-L-methionyl-tRNA(fMet) + (6S)-5,6,7,8-tetrahydrofolate + H(+). Attaches a formyl group to the free amino group of methionyl-tRNA(fMet). The formyl group appears to play a dual role in the initiator identity of N-formylmethionyl-tRNA by promoting its recognition by IF2 and preventing the misappropriation of this tRNA by the elongation apparatus. In Methylibium petroleiphilum (strain ATCC BAA-1232 / LMG 22953 / PM1), this protein is Methionyl-tRNA formyltransferase.